A 307-amino-acid polypeptide reads, in one-letter code: Elongation factor Ts (307 aa).

Positions 80-83 (TDFV) are involved in Mg(2+) ion dislocation from EF-Tu.

The protein belongs to the EF-Ts family.

The protein localises to the cytoplasm. In terms of biological role, associates with the EF-Tu.GDP complex and induces the exchange of GDP to GTP. It remains bound to the aminoacyl-tRNA.EF-Tu.GTP complex up to the GTP hydrolysis stage on the ribosome. This Bradyrhizobium sp. (strain ORS 278) protein is Elongation factor Ts.